A 225-amino-acid polypeptide reads, in one-letter code: GTP cyclohydrolase 1 (225 aa).

The span at 1–12 shows a compositional bias: basic and acidic residues; the sequence is MERSKQSHDNQA. The disordered stretch occupies residues 1–59; sequence MERSKQSHDNQADSRPTTNESSLNGHFDGLVKKTPGMWDVKGRGTAGESSSHTGSSVVE. Composition is skewed to polar residues over residues 13–24 and 47–58; these read DSRPTTNESSLN and GESSSHTGSSVV. Zn(2+)-binding residues include Cys-149, His-152, and Cys-220.

Belongs to the GTP cyclohydrolase I family. As to quaternary structure, toroid-shaped homodecamer, composed of two pentamers of five dimers.

The protein resides in the cytoplasm. The protein localises to the nucleus. It catalyses the reaction GTP + H2O = 7,8-dihydroneopterin 3'-triphosphate + formate + H(+). Its pathway is cofactor biosynthesis; 7,8-dihydroneopterin triphosphate biosynthesis; 7,8-dihydroneopterin triphosphate from GTP: step 1/1. With respect to regulation, GTP shows a positive allosteric effect, and tetrahydrobiopterin inhibits the enzyme activity. Zinc is required for catalytic activity. Inhibited by Mg(2+). Functionally, may positively regulate nitric oxide synthesis in endothelial cells. May be involved in dopamine synthesis. May modify pain sensitivity and persistence. The sequence is that of GTP cyclohydrolase 1 (gch1) from Oncorhynchus mykiss (Rainbow trout).